A 375-amino-acid polypeptide reads, in one-letter code: Alpha-2,8-sialyltransferase 8B (375 aa).

Residues 1 to 6 (MQLQFR) lie on the Cytoplasmic side of the membrane. A helical; Signal-anchor for type II membrane protein membrane pass occupies residues 7–23 (SWMLAALTLLVVFLIFA). At 24–375 (DISEIEEEIG…LTVGQCDGAT (352 aa)) the chain is on the lumenal side. N-linked (GlcNAc...) asparagine glycans are attached at residues N60, N72, N89, and N134. 2 cysteine pairs are disulfide-bonded: C157-C307 and C171-C371. N162 and N185 together coordinate CMP-N-acetyl-beta-neuraminate. N-linked (GlcNAc...) asparagine glycosylation is found at N219 and N234. T294, T295, G296, W316, Y329, and H330 together coordinate CMP-N-acetyl-beta-neuraminate. H346 serves as the catalytic Proton donor/acceptor.

The protein belongs to the glycosyltransferase 29 family. In terms of processing, autopolysialylated. Autopolysialylation is not a prerequisite for the polysialylation acitity, but enhances the polysialylation acitity. Expressed only in newborn brain.

It localises to the golgi apparatus membrane. The protein resides in the secreted. It is found in the cell membrane. It catalyses the reaction [N-acetyl-alpha-D-neuraminosyl-(2-&gt;8)](n) + CMP-N-acetyl-beta-neuraminate = [N-acetyl-alpha-D-neuraminosyl-(2-&gt;8)](n+1) + CMP + H(+). It functions in the pathway protein modification; protein glycosylation. Its function is as follows. Catalyzes the transfer of a sialic acid from a CMP-linked sialic acid donor onto a terminal alpha-2,3-, alpha-2,6-, or alpha-2,8-linked sialic acid of an N-linked glycan acceptor through alpha-2,8-linkages. Therefore, participates in polysialic acid synthesis on various sialylated N-acetyllactosaminyl oligosaccharides (alpha-2,3-, alpha-2,6-, or alpha-2,8-linked sialic acid), including NCAM1, NCAM1 N-glycans, FETUB N-glycans, and to a lesser extent sialylparagloboside (SPG) and AHSG, which does not require the initial addition of an alpha 2,8-sialic acid. However, does not exhibit sialic acid-polymerase activity. Catalyzes polysialic acid synthesis in the hippocampal on NCAM1 and supports neurite outgrowth. ST8SIA2-mediated polysialylation influences on oligodendrocyte differentiation and may promote the integrity of myelin and axons. This chain is Alpha-2,8-sialyltransferase 8B, found in Rattus norvegicus (Rat).